Consider the following 241-residue polypeptide: Sugar fermentation stimulation protein homolog (241 aa).

It belongs to the SfsA family.

The protein is Sugar fermentation stimulation protein homolog of Jannaschia sp. (strain CCS1).